Consider the following 2298-residue polypeptide: Protein Ycf2 (2298 aa).

Position 1640 to 1647 (1640 to 1647) interacts with ATP; the sequence is GSIGTGRS.

It belongs to the Ycf2 family.

It localises to the plastid. The protein resides in the chloroplast stroma. Its function is as follows. Probable ATPase of unknown function. Its presence in a non-photosynthetic plant (Epifagus virginiana) and experiments in tobacco indicate that it has an essential function which is probably not related to photosynthesis. The sequence is that of Protein Ycf2 from Carica papaya (Papaya).